Here is a 413-residue protein sequence, read N- to C-terminus: MDHLKRQDEKVFAAIEAELGRQRSKIELIASENFVSEAVMEAQGSVLTNKYAEGYPGKRYYGGCEHVDVVEDIARDRVKEIFGAEHVNVQPHSGAQANMAVYFTILEQGDTVLGMNLSHGGHLTHGSPVNFSGVQYNFVEYGVDAESHCINYDDVLAKAKEHKPKLIVAGASAYPRVIDFKRFREIADEVGAYLMVDMAHIAGLVAAGLHPNPVPHAHFVTTTTHKTLRGPRGGMILCEEQFAKQIDKSIFPGIQGGPLMHVIAAKAVAFGEALQDDFKTYAQNIINNANRLAEGLQKEGLTLVSGGTDNHLILIDVRNLEITGKVAEHVLDEVGITVNKNTIPFETASPFVTSGVRIGTAAVTSRGFGLEDMDEIASLIAYTLKNHENEAALEEARKRVEALTSKFPMYTDL.

Residues Leu117 and 121–123 (GHL) each bind (6S)-5,6,7,8-tetrahydrofolate. Lys226 is subject to N6-(pyridoxal phosphate)lysine. Residues Glu239 and 349–351 (SPF) each bind (6S)-5,6,7,8-tetrahydrofolate.

The protein belongs to the SHMT family. As to quaternary structure, homodimer. It depends on pyridoxal 5'-phosphate as a cofactor.

Its subcellular location is the cytoplasm. It catalyses the reaction (6R)-5,10-methylene-5,6,7,8-tetrahydrofolate + glycine + H2O = (6S)-5,6,7,8-tetrahydrofolate + L-serine. The protein operates within one-carbon metabolism; tetrahydrofolate interconversion. Its pathway is amino-acid biosynthesis; glycine biosynthesis; glycine from L-serine: step 1/1. Functionally, catalyzes the reversible interconversion of serine and glycine with tetrahydrofolate (THF) serving as the one-carbon carrier. This reaction serves as the major source of one-carbon groups required for the biosynthesis of purines, thymidylate, methionine, and other important biomolecules. Also exhibits THF-independent aldolase activity toward beta-hydroxyamino acids, producing glycine and aldehydes, via a retro-aldol mechanism. The sequence is that of Serine hydroxymethyltransferase from Bacillus anthracis (strain A0248).